The primary structure comprises 447 residues: SNF1-related protein kinase regulatory subunit gamma-1-like (447 aa).

At Ala2 the chain carries N-acetylalanine. At Ser35 the chain carries Phosphoserine. CBS domains are found at residues 54-120 (QVPG…SAEL), 214-275 (SFRW…GRDW), 292-350 (MSPN…PEVF), and 374-433 (LAIP…PNYF).

The protein belongs to the 5'-AMP-activated protein kinase gamma subunit family. As to quaternary structure, subunit of a probable heterotrimeric complex consisting of an alpha catalytic (KIN10 or KIN11) subunit, and a beta (KINB) and a gamma (KING or SNF4) non-catalytic regulatory subunits.

In terms of biological role, regulatory subunit of the probable trimeric SNF1-related protein kinase (SnRK) complex, which may play a role in a signal transduction cascade regulating gene expression and carbohydrate metabolism in higher plants. The protein is SNF1-related protein kinase regulatory subunit gamma-1-like (CBSCBS2) of Arabidopsis thaliana (Mouse-ear cress).